We begin with the raw amino-acid sequence, 207 residues long: Outer-membrane lipoprotein carrier protein (207 aa).

Residues 1–21 (MRLIRMLLLPVLAVTTLSAHA) form the signal peptide.

The protein belongs to the LolA family. As to quaternary structure, monomer.

It is found in the periplasm. Participates in the translocation of lipoproteins from the inner membrane to the outer membrane. Only forms a complex with a lipoprotein if the residue after the N-terminal Cys is not an aspartate (The Asp acts as a targeting signal to indicate that the lipoprotein should stay in the inner membrane). This is Outer-membrane lipoprotein carrier protein from Pseudomonas fluorescens (strain ATCC BAA-477 / NRRL B-23932 / Pf-5).